A 532-amino-acid polypeptide reads, in one-letter code: Bifunctional purine biosynthesis protein PurH (532 aa).

In terms of domain architecture, MGS-like spans M1–V147.

It belongs to the PurH family.

It carries out the reaction (6R)-10-formyltetrahydrofolate + 5-amino-1-(5-phospho-beta-D-ribosyl)imidazole-4-carboxamide = 5-formamido-1-(5-phospho-D-ribosyl)imidazole-4-carboxamide + (6S)-5,6,7,8-tetrahydrofolate. The catalysed reaction is IMP + H2O = 5-formamido-1-(5-phospho-D-ribosyl)imidazole-4-carboxamide. It functions in the pathway purine metabolism; IMP biosynthesis via de novo pathway; 5-formamido-1-(5-phospho-D-ribosyl)imidazole-4-carboxamide from 5-amino-1-(5-phospho-D-ribosyl)imidazole-4-carboxamide (10-formyl THF route): step 1/1. Its pathway is purine metabolism; IMP biosynthesis via de novo pathway; IMP from 5-formamido-1-(5-phospho-D-ribosyl)imidazole-4-carboxamide: step 1/1. The protein is Bifunctional purine biosynthesis protein PurH of Haemophilus influenzae (strain ATCC 51907 / DSM 11121 / KW20 / Rd).